Reading from the N-terminus, the 78-residue chain is MLDENKMKRINELAQKKKATGLTDQEGKEQTLLRKEYLQSFRQSFKKTIENTTVIDPEGNDVTPDKVKEIQKLNNIRK.

It belongs to the UPF0291 family.

The protein resides in the cytoplasm. In Macrococcus caseolyticus (strain JCSC5402) (Macrococcoides caseolyticum), this protein is UPF0291 protein MCCL_0996.